We begin with the raw amino-acid sequence, 35 residues long: Photosystem II reaction center protein M (35 aa).

The chain crosses the membrane as a helical span at residues Gly7–Ile27.

It belongs to the PsbM family. In terms of assembly, PSII is composed of 1 copy each of membrane proteins PsbA, PsbB, PsbC, PsbD, PsbE, PsbF, PsbH, PsbI, PsbJ, PsbK, PsbL, PsbM, PsbT, PsbX, PsbY, PsbZ, Psb30/Ycf12, peripheral proteins PsbO, CyanoQ (PsbQ), PsbU, PsbV and a large number of cofactors. It forms dimeric complexes.

The protein localises to the cellular thylakoid membrane. One of the components of the core complex of photosystem II (PSII). PSII is a light-driven water:plastoquinone oxidoreductase that uses light energy to abstract electrons from H(2)O, generating O(2) and a proton gradient subsequently used for ATP formation. It consists of a core antenna complex that captures photons, and an electron transfer chain that converts photonic excitation into a charge separation. This subunit is found at the monomer-monomer interface. The polypeptide is Photosystem II reaction center protein M (Gloeothece citriformis (strain PCC 7424) (Cyanothece sp. (strain PCC 7424))).